The following is a 449-amino-acid chain: Phosphoglucosamine mutase (449 aa).

Residue Ser104 is the Phosphoserine intermediate of the active site. Positions 104, 243, 245, and 247 each coordinate Mg(2+). At Ser104 the chain carries Phosphoserine.

This sequence belongs to the phosphohexose mutase family. It depends on Mg(2+) as a cofactor. In terms of processing, activated by phosphorylation.

It carries out the reaction alpha-D-glucosamine 1-phosphate = D-glucosamine 6-phosphate. Functionally, catalyzes the conversion of glucosamine-6-phosphate to glucosamine-1-phosphate. This is Phosphoglucosamine mutase from Xanthomonas axonopodis pv. citri (strain 306).